A 309-amino-acid chain; its full sequence is Homoserine O-succinyltransferase (309 aa).

C142 functions as the Acyl-thioester intermediate in the catalytic mechanism. Substrate-binding residues include K163 and S192. H235 (proton acceptor) is an active-site residue. E237 is a catalytic residue. Residue R249 coordinates substrate.

Belongs to the MetA family. As to quaternary structure, homodimer.

The protein localises to the cytoplasm. It catalyses the reaction L-homoserine + succinyl-CoA = O-succinyl-L-homoserine + CoA. It functions in the pathway amino-acid biosynthesis; L-methionine biosynthesis via de novo pathway; O-succinyl-L-homoserine from L-homoserine: step 1/1. Its function is as follows. Transfers a succinyl group from succinyl-CoA to L-homoserine, forming succinyl-L-homoserine. In Salmonella choleraesuis (strain SC-B67), this protein is Homoserine O-succinyltransferase.